The following is a 384-amino-acid chain: Lipid-A-disaccharide synthase 1 (384 aa).

This sequence belongs to the LpxB family.

The catalysed reaction is a lipid X + a UDP-2-N,3-O-bis[(3R)-3-hydroxyacyl]-alpha-D-glucosamine = a lipid A disaccharide + UDP + H(+). The protein operates within bacterial outer membrane biogenesis; LPS lipid A biosynthesis. Functionally, condensation of UDP-2,3-diacylglucosamine and 2,3-diacylglucosamine-1-phosphate to form lipid A disaccharide, a precursor of lipid A, a phosphorylated glycolipid that anchors the lipopolysaccharide to the outer membrane of the cell. The chain is Lipid-A-disaccharide synthase 1 from Legionella pneumophila (strain Lens).